A 216-amino-acid chain; its full sequence is Ceramide-1-phosphate transfer protein (216 aa).

5 residues coordinate an N-acylsphingoid base 1-phosphate: Asp-56, Lys-60, Arg-108, Arg-112, and His-152.

The protein belongs to the GLTP family.

It localises to the cytoplasm. The protein resides in the cytosol. It is found in the golgi apparatus. The protein localises to the trans-Golgi network membrane. Its subcellular location is the cell membrane. It localises to the endosome membrane. The protein resides in the nucleus outer membrane. The catalysed reaction is N-(hexadecanoyl)-sphing-4-enine-1-phosphate(in) = N-(hexadecanoyl)-sphing-4-enine-1-phosphate(out). It catalyses the reaction N-(9Z-octadecenoyl)-sphing-4-enine-1-phosphate(in) = N-(9Z-octadecenoyl)-sphing-4-enine-1-phosphate(out). Its function is as follows. Mediates the intracellular transfer of ceramide-1-phosphate (C1P) between organelle membranes and the cell membrane. Required for normal structure of the Golgi stacks. Can bind phosphoceramides with a variety of aliphatic chains, but has a preference for lipids with saturated C16:0 or monounsaturated C18:1 aliphatic chains, and is inefficient with phosphoceramides containing lignoceryl (C24:0). Plays a role in the regulation of the cellular levels of ceramide-1-phosphate, and thereby contributes to the regulation of phospholipase PLA2G4A activity and the release of arachidonic acid. Has no activity with galactosylceramide, lactosylceramide, sphingomyelin, phosphatidylcholine, phosphatidic acid and ceramide. C1P transfer is stimulated by phosphatidylserine in C1P source vesicles. Regulates autophagy, inflammasome mediated IL1B and IL18 processing, and pyroptosis, but not apoptosis. The chain is Ceramide-1-phosphate transfer protein (Cptp) from Rattus norvegicus (Rat).